The sequence spans 113 residues: Large ribosomal subunit protein bL17 (113 aa).

It belongs to the bacterial ribosomal protein bL17 family. In terms of assembly, part of the 50S ribosomal subunit. Contacts protein L32.

The sequence is that of Large ribosomal subunit protein bL17 from Clostridium perfringens (strain ATCC 13124 / DSM 756 / JCM 1290 / NCIMB 6125 / NCTC 8237 / Type A).